We begin with the raw amino-acid sequence, 486 residues long: Arginine/agmatine antiporter (486 aa).

12 consecutive transmembrane segments (helical) span residues 12–32, 41–61, 85–105, 132–152, 160–180, 211–231, 242–262, 296–316, 341–361, 367–387, 418–438, and 461–481; these read LGAIALAGMVISSMIGGGIFS, AGVGAIILAWILTGVGMFFIA, GFGPYIGFTIGWGYWLCQIFG, PAILGGSILIWVFNFIVLKGI, IIGTVGKLVPLIVFIIITAFL, STMLVTLWAFIGIEGAVVMSA, ATILGFTGCLTVYILLSILPF, VGLLIAVLSSWLSWTMIVAEI, VSLYVTSALMQIAMLLVYFST, MLSITGVMVLPAYFASAAFLV, IWLIYAGGLKYLLMAIILLAL, and EVTEITIIAFLALLAIFLFST.

It belongs to the amino acid-polyamine-organocation (APC) superfamily. Basic amino acid/polyamine antiporter (APA) (TC 2.A.3.2) family.

The protein resides in the cell inner membrane. Its function is as follows. Catalyzes the exchange of L-arginine for agmatine. The arginine uptake by the bacterium in the macrophage may be a virulence factor against the host innate immune response. This is Arginine/agmatine antiporter (aaxC) from Chlamydia abortus (strain DSM 27085 / S26/3) (Chlamydophila abortus).